The sequence spans 409 residues: Arginine biosynthesis bifunctional protein ArgJ (409 aa).

6 residues coordinate substrate: threonine 157, lysine 183, threonine 194, glutamate 281, asparagine 404, and serine 409. Threonine 194 functions as the Nucleophile in the catalytic mechanism.

It belongs to the ArgJ family. In terms of assembly, heterotetramer of two alpha and two beta chains.

It is found in the cytoplasm. It catalyses the reaction N(2)-acetyl-L-ornithine + L-glutamate = N-acetyl-L-glutamate + L-ornithine. It carries out the reaction L-glutamate + acetyl-CoA = N-acetyl-L-glutamate + CoA + H(+). It participates in amino-acid biosynthesis; L-arginine biosynthesis; L-ornithine and N-acetyl-L-glutamate from L-glutamate and N(2)-acetyl-L-ornithine (cyclic): step 1/1. It functions in the pathway amino-acid biosynthesis; L-arginine biosynthesis; N(2)-acetyl-L-ornithine from L-glutamate: step 1/4. Functionally, catalyzes two activities which are involved in the cyclic version of arginine biosynthesis: the synthesis of N-acetylglutamate from glutamate and acetyl-CoA as the acetyl donor, and of ornithine by transacetylation between N(2)-acetylornithine and glutamate. This is Arginine biosynthesis bifunctional protein ArgJ from Zymomonas mobilis subsp. mobilis (strain ATCC 31821 / ZM4 / CP4).